The primary structure comprises 224 residues: IAP-like protein p27 (224 aa).

The BIR repeat unit spans residues 29-92 (VDARNQSFAI…GFWSRNCGFM (64 aa)). Cys-62, Cys-65, His-82, and Cys-89 together coordinate Zn(2+).

In terms of biological role, not essential for growth or virulence. Does not have antiapoptotic function. The protein is IAP-like protein p27 (p27) of Ornithodoros (relapsing fever ticks).